The primary structure comprises 202 residues: Small ribosomal subunit protein bS20c (202 aa).

The transit peptide at 1–79 directs the protein to the chloroplast; it reads MATIVQCLSS…KPMRQLIVCE (79 aa). A disordered region spans residues 89 to 110; it reads SAAKRARQAEKRRVYNKSKKSE.

This sequence belongs to the bacterial ribosomal protein bS20 family. In terms of assembly, part of the 30S ribosomal subunit.

It is found in the plastid. Its subcellular location is the chloroplast. In terms of biological role, binds directly to 16S ribosomal RNA. This Arabidopsis thaliana (Mouse-ear cress) protein is Small ribosomal subunit protein bS20c (RPS20).